Here is a 190-residue protein sequence, read N- to C-terminus: GTP cyclohydrolase 1 (190 aa).

The Zn(2+) site is built by Cys-79, His-82, and Cys-151.

The protein belongs to the GTP cyclohydrolase I family. In terms of assembly, toroid-shaped homodecamer, composed of two pentamers of five dimers.

The enzyme catalyses GTP + H2O = 7,8-dihydroneopterin 3'-triphosphate + formate + H(+). The protein operates within cofactor biosynthesis; 7,8-dihydroneopterin triphosphate biosynthesis; 7,8-dihydroneopterin triphosphate from GTP: step 1/1. The chain is GTP cyclohydrolase 1 from Clostridioides difficile (strain 630) (Peptoclostridium difficile).